The chain runs to 146 residues: MELNSLKPAAGASKNRKRIGRGTGSGHGKTATKGHKGQKARSGGSIKAGFEGGQMPMHRRLPKRGFTPLAKKIYSVVNLSQLDVFETGSCVDIEAMQKSGLVKNVCDGIKILATGELTKALTVKAHKFSATARNKITSVGGTVEEI.

The segment at 1–61 (MELNSLKPAA…GGQMPMHRRL (61 aa)) is disordered. Residues 30-39 (TATKGHKGQK) show a composition bias toward basic residues.

The protein belongs to the universal ribosomal protein uL15 family. In terms of assembly, part of the 50S ribosomal subunit.

Functionally, binds to the 23S rRNA. The polypeptide is Large ribosomal subunit protein uL15 (Geotalea uraniireducens (strain Rf4) (Geobacter uraniireducens)).